Consider the following 615-residue polypeptide: Delta-like protein B (615 aa).

The first 20 residues, 1-20 (MAHLSLYCLLSVSLLQLVAS), serve as a signal peptide directing secretion. Over 21–522 (SGVFELKVHS…VGQTSPSAVA (502 aa)) the chain is Extracellular. Residues 159 to 203 (VFCDEFYFGEACSDYCRPRDDTLGHYTCDENGNKECLVGWQGDYC) enclose the DSL domain. 26 disulfides stabilise this stretch: Cys-161/Cys-170, Cys-174/Cys-186, Cys-194/Cys-203, Cys-208/Cys-219, Cys-212/Cys-225, Cys-227/Cys-236, Cys-245/Cys-250, Cys-258/Cys-267, Cys-274/Cys-286, Cys-280/Cys-296, Cys-298/Cys-307, Cys-314/Cys-325, Cys-319/Cys-334, Cys-336/Cys-345, Cys-352/Cys-363, Cys-357/Cys-373, Cys-375/Cys-384, Cys-391/Cys-402, Cys-396/Cys-411, Cys-413/Cys-422, Cys-429/Cys-440, Cys-434/Cys-449, Cys-451/Cys-460, Cys-467/Cys-478, Cys-472/Cys-487, and Cys-489/Cys-498. EGF-like domains are found at residues 204-237 (SDPICSSDCSERHGYCESPGECKCRLGWQGPSCS), 241-268 (HYPGCLHGTCSQPWQCVCKEGWGGLFCN), and 270-308 (DLNYCTNHKPCANGATCTNTGQGSYTCTCRPGFGGTNCE). The EGF-like 4; calcium-binding domain occupies 310–346 (EINECDCNPCKNGGSCNDLENDYSCTCPQGFYGKNCE). EGF-like domains follow at residues 348-385 (IAMTCADDPCFNGGTCEEKFTGGYVCRCPPTFTGSNCE) and 387-423 (RLDRCSHKPCANGGECVDLGASALCRCRPGFSGSRCE). The region spanning 425 to 461 (NIDDCARYPCQNAGTCQDGINDYTCTCTLGFTGKNCS) is the EGF-like 7; calcium-binding domain. Asn-459 carries an N-linked (GlcNAc...) asparagine glycan. The region spanning 463 to 499 (RADACLTNPCLHGGTCFTHFSGPVCQCVPGFMGSTCE) is the EGF-like 8 domain. A helical membrane pass occupies residues 523–543 (VSCVLGVLAVFLGVCVGLVVL). At 544–615 (RRRRHRLRRQ…FLWSAGGGLR (72 aa)) the chain is on the cytoplasmic side.

Ubiquitinated by mib, leading to its endocytosis and subsequent degradation.

Its subcellular location is the membrane. In terms of biological role, acts as a ligand for Notch receptors and is involved in primary neurogenesis. Can activate Notch receptors, thereby playing a key role in lateral inhibition, a process that prevents the immediate neighbors of each nascent neural cell from simultaneously embarking on neural differentiation. The protein is Delta-like protein B (dlb) of Danio rerio (Zebrafish).